Reading from the N-terminus, the 211-residue chain is Protoglabretal synthase MOI1 (211 aa).

5 helical membrane passes run Ala-16–Ile-36, Leu-50–Phe-70, Val-104–Tyr-124, Ile-135–Ala-155, and Ile-179–Cys-199. The region spanning Ile-46 to Ala-188 is the EXPERA domain.

Belongs to the EBP family. In terms of tissue distribution, expressed in maturing fruits and in juice vesicles.

It is found in the membrane. The catalysed reaction is 7,8-epoxymelianol = protoglabretal. It functions in the pathway secondary metabolite biosynthesis; terpenoid biosynthesis. Functionally, isomerase involved in the biosynthesis of glabretanes triterpene natural products such as glabretal, a component with in vitro antiproliferative properties on lymphocytes. Catalyzes the conversion of 7,8-epoxymelianol to protoglabretal via skeletal rearrangements. The protein is Protoglabretal synthase MOI1 of Citrus sinensis (Sweet orange).